A 109-amino-acid polypeptide reads, in one-letter code: Putative double-stranded DNA mimic protein YciU (109 aa).

This sequence belongs to the putative dsDNA mimic protein family.

May act as a double-stranded DNA (dsDNA) mimic. Probably regulates the activity of a dsDNA-binding protein. This chain is Putative double-stranded DNA mimic protein YciU, found in Escherichia coli O45:K1 (strain S88 / ExPEC).